A 669-amino-acid chain; its full sequence is MSDVAQRLTELRKTLHEHGVRYYVEDAPSIPDAEYDRLMRELLELEAAHPELMSSDSPSLRVGGRPLDAFESVVHEIPMLSLDNAFDDGELESFYRRMTDRIPAVQHSAFCCEPKLDGLAVSLLYENGVLTRAATRGDGTTGENITENVRTIKSIPLRLQGADFPTRLEVRGEVFMPKAGFEALNARALKKGEKQFVNPRNAAAGSLRQLDSKITAQRPLAFYAYSVGVIEGGELATSHYQRFLQLKGWGLPICPETKLVTSLAEVKAFYQDILQRRQSLAYEIDGVVIKVDDIQLQERLGFVARAPRWAIAYKFPAQEELTLLNDVEFQVGRTGAITPVAKLEPVFVGGVTVSNATLHNADEIERLGVMVGDTVVIRRAGDVIPQIVSVVLERRPENAKSIVFPTRCPVCQSDVERVEGEAVARCSGGLICQAQRKEALKHFVSRKAMDVEGLGDKVIEQLVDREMVSTPADLFRLRAGELTILERMGPKSAQNVIDALNKAKQTTLPKFLYALGIREVGEATALNLAQHFLSLEAIQQASLEQFIEVPDVGVVVASHLQAFFAQDRNQQVINELLEQGITWPALTAAPVAVDSALAGKIVVLTGSFTQLSRNDAKAALQALGAKVTGSVSKNTDMVFAGEAAGSKLAKATELGIQVFDEQALIEFLK.

Residues 32 to 36 (DAEYD), 81 to 82 (SL), and glutamate 113 each bind NAD(+). The active-site N6-AMP-lysine intermediate is lysine 115. Residues arginine 136, glutamate 173, lysine 290, and lysine 314 each contribute to the NAD(+) site. Zn(2+) contacts are provided by cysteine 408, cysteine 411, cysteine 426, and cysteine 432. The BRCT domain occupies 592–669 (AVDSALAGKI…DEQALIEFLK (78 aa)).

Belongs to the NAD-dependent DNA ligase family. LigA subfamily. Requires Mg(2+) as cofactor. It depends on Mn(2+) as a cofactor.

It catalyses the reaction NAD(+) + (deoxyribonucleotide)n-3'-hydroxyl + 5'-phospho-(deoxyribonucleotide)m = (deoxyribonucleotide)n+m + AMP + beta-nicotinamide D-nucleotide.. In terms of biological role, DNA ligase that catalyzes the formation of phosphodiester linkages between 5'-phosphoryl and 3'-hydroxyl groups in double-stranded DNA using NAD as a coenzyme and as the energy source for the reaction. It is essential for DNA replication and repair of damaged DNA. In Vibrio cholerae serotype O1 (strain ATCC 39315 / El Tor Inaba N16961), this protein is DNA ligase.